The sequence spans 270 residues: Tetraspanin-17 (270 aa).

Topologically, residues 1–19 (MPGKHQQFQDPEVGCCGKY) are cytoplasmic. Residues 20-40 (FLFGFNIVFWVLGALFLAIGL) traverse the membrane as a helical segment. Over 41–63 (WAWGEKGVLSNISALTDLGGLDP) the chain is Extracellular. Asn-51 carries N-linked (GlcNAc...) asparagine glycosylation. Residues 64–84 (VWLFVVVGGVMSVLGFAGCIG) form a helical membrane-spanning segment. At 85–94 (ALRENTFLLK) the chain is on the cytoplasmic side. Residues 95 to 115 (FFSVFLGLIFFLELAAGILAF) form a helical membrane-spanning segment. Over 116 to 234 (VFKDWIRDQL…GQFEKWLQDN (119 aa)) the chain is Extracellular. 4 cysteine pairs are disulfide-bonded: Cys-155-Cys-223, Cys-156-Cys-188, Cys-172-Cys-182, and Cys-189-Cys-202. A glycan (N-linked (GlcNAc...) asparagine) is linked at Asn-171. Residues 235-255 (LIVVAGVLVGIALLQIFGLCL) form a helical membrane-spanning segment. Over 256–270 (AQNLVSDIKAVKANW) the chain is Cytoplasmic.

It belongs to the tetraspanin (TM4SF) family. Interacts with ADAM10; the interaction influences ADAM10 substrate specificity, endocytosis and turnover.

Its subcellular location is the cell membrane. Functionally, part of TspanC8 subgroup, composed of 6 members that interact with the transmembrane metalloprotease ADAM10. This interaction is required for ADAM10 exit from the endoplasmic reticulum and for enzymatic maturation and trafficking to the cell surface as well as substrate specificity. Different TspanC8/ADAM10 complexes have distinct substrates. Seems to regulate VE-cadherin expression in endothelial cells probably through interaction with ADAM10, promoting leukocyte transmigration. This chain is Tetraspanin-17 (Tspan17), found in Mus musculus (Mouse).